We begin with the raw amino-acid sequence, 802 residues long: Homeobox-leucine zipper protein ANTHOCYANINLESS 2 (802 aa).

The segment at 71-143 is disordered; the sequence is QPERGTNRGE…RKKRYHRHTP (73 aa). The span at 103 to 113 shows a compositional bias: basic and acidic residues; it reads RSREEEHESRS. Positions 133 to 142 are enriched in basic residues; sequence PRKKRYHRHT. Positions 134 to 193 form a DNA-binding region, homeobox; that stretch reads RKKRYHRHTPQQIQELESMFKECPHPDEKQRLELSKRLCLETRQVKFWFQNRRTQMKTQL. Positions 182–221 form a coiled coil; it reads FQNRRTQMKTQLERHENALLRQENDKLRAENMSIREAMRN. An START domain is found at 315-546; it reads GIDQKSVLLE…LQRQCECLAI (232 aa).

Belongs to the HD-ZIP homeobox family. Class IV subfamily. In terms of assembly, interacts with AIL7/PLT7, ANT, BBM and AIL1. As to expression, expressed in roots, stems, leaves and floral buds.

The protein localises to the nucleus. Its function is as follows. Probable transcription factor involved in the regulation of the tissue-specific accumulation of anthocyanins and in cellular organization of the primary root. The chain is Homeobox-leucine zipper protein ANTHOCYANINLESS 2 from Arabidopsis thaliana (Mouse-ear cress).